A 29-amino-acid polypeptide reads, in one-letter code: Toxin Bcg III 15.67 (29 aa).

Residues glutamine 2 to glutamate 29 enclose the EGF-like domain. Cysteine 6 and cysteine 21 are oxidised to a cystine.

It is found in the secreted. Its subcellular location is the nematocyst. In terms of biological role, has both toxic and EGF activity. This is Toxin Bcg III 15.67 from Bunodosoma cangicum (Sea anemone).